Reading from the N-terminus, the 156-residue chain is CD-NTase-associated protein 8 (156 aa).

Belongs to the bacterial HORMA family. HORMA3 subfamily. In terms of assembly, interacts with Cap7 (also called HORMA2) and CdnC; forms CdnD:Cap7:Cap8 (also called CdnD:HORMA2:HORMA3) complexes with stoichiometries of 1:1:1 and 2:1:1.

Its function is as follows. CBASS (cyclic oligonucleotide-based antiphage signaling system) provides immunity against bacteriophage. The CD-NTase protein synthesizes cyclic nucleotides in response to infection; these serve as specific second messenger signals. The signals activate a diverse range of effectors, leading to bacterial cell death and thus abortive phage infection. A type III-C(AAA) CBASS system. A member of the CBASS system in this bacteria. It does not seem to bind a closure peptide, its exact function is unknown. The protein is CD-NTase-associated protein 8 of Pseudomonas aeruginosa.